Consider the following 998-residue polypeptide: Collagen alpha-1(I) chain (998 aa).

The disordered stretch occupies residues 1–998; sequence GGVSVPGPMG…PGPPGPPGPP (998 aa). 4-hydroxyproline occurs at positions 18, 21, 24, 33, 48, 63, 69, 78, and 84. The segment covering 26–39 has biased composition (low complexity); that stretch reads PQGFQGPPGSSGPM. Positions 51 to 65 are enriched in basic and acidic residues; the sequence is NGDDGEAGKPGRPGE. The residue at position 87 (Lys-87) is a 5-hydroxylysine; alternate. A glycan (O-linked (Gal...) hydroxylysine; alternate) is linked at Lys-87. Residue Ser-93 is modified to Phosphoserine. Low complexity predominate over residues 101 to 115; sequence DAGPAGPKQMGPRGL. A 4-hydroxyproline mark is found at Pro-116, Pro-122, Pro-143, Pro-152, Pro-155, Pro-182, Pro-185, Pro-197, Pro-203, Pro-212, Pro-218, Pro-221, and Pro-236. Residues 122 to 140 are compositionally biased toward low complexity; the sequence is PGASGPAGARGNDGATGAA. The span at 142–154 shows a compositional bias: pro residues; the sequence is PPGPTGPAGPPGF. A compositionally biased stretch (low complexity) spans 188–238; the sequence is AGAAGPAGNPGADGQPGAKGANGAPGIAGAPGFPGARGPSGPQGPSGAPGP. Lys-239 bears the 5-hydroxylysine mark. 8 positions are modified to 4-hydroxyproline: Pro-245, Pro-248, Pro-260, Pro-269, Pro-284, Pro-290, Pro-299, and Pro-305. Positions 294–303 are enriched in gly residues; it reads GERGGPGSRG. Lys-314 is modified (5-hydroxylysine). 4-hydroxyproline occurs at positions 323, 332, 338, 344, 353, 356, 365, 374, 380, 392, 401, 410, 413, 431, 449, 455, 461, 467, 473, 479, 491, 500, 511, 523, 526, 532, 538, and 547. Over residues 347–401 the composition is skewed to low complexity; the sequence is KGLTGSPGSPGPDGKTGPPGPAGQDGRPGPAGPPGARGQAGVMGFPGPKGAAGEP. Over residues 443–470 the composition is skewed to low complexity; sequence QGPAGSPGFQGLPGPAGPPGEAGKPGEQ. Over residues 513 to 535 the composition is skewed to low complexity; the sequence is NDGAKGDAGAPGAPGSQGAPGLQ. Lys-559 is subject to 5-hydroxylysine. 2 positions are modified to 4-hydroxyproline: Pro-565 and Pro-580. Over residues 592–606 the composition is skewed to low complexity; it reads TGPSGPAGPTGARGA. Ser-595 is subject to Phosphoserine. Residues Pro-607, Pro-613, Pro-616, Pro-625, Pro-631, Pro-649, Pro-658, and Pro-667 each carry the 4-hydroxyproline modification. Residues 619 to 646 are compositionally biased toward low complexity; it reads AGFAGPPGADGQPGAKGEPGDAGAKGDA. Residues 648 to 660 show a composition bias toward pro residues; sequence PPGPAGPTGPPGP. Lys-670 bears the 5-hydroxylysine mark. A compositionally biased stretch (low complexity) spans 675 to 691; that stretch reads SAGPPGATGFPGAAGRV. 2 positions are modified to 4-hydroxyproline: Pro-679 and Pro-685. Pro-693 is subject to 3-hydroxyproline. Pro-694, Pro-703, Pro-706, Pro-727, Pro-736, Pro-744, Pro-753, Pro-771, Pro-780, Pro-783, Pro-789, Pro-804, Pro-810, Pro-816, Pro-825, and Pro-831 each carry 4-hydroxyproline. Low complexity predominate over residues 720-729; that stretch reads ETGPAGRPGE. Residues 741–762 show a composition bias toward low complexity; that stretch reads KGSPGADGPAGAPGTPGPQGIA. The segment covering 803–813 has biased composition (pro residues); the sequence is PPGPMGPPGLA. Residues 815–830 show a composition bias toward low complexity; that stretch reads PPGEAGREGSPGAEGS. The residue at position 840 (Lys-840) is a 5-hydroxylysine. Over residues 848–863 the composition is skewed to pro residues; it reads PGPPGAPGAPGAPGPV. 4-hydroxyproline occurs at positions 851, 854, and 857. Residues 884-898 are compositionally biased toward low complexity; the sequence is AGPAGARGPAGPQGP. The span at 899–913 shows a compositional bias: basic and acidic residues; that stretch reads RGDKGETGEQGDRGI. The residue at position 902 (Lys-902) is a 5-hydroxylysine. Lys-914 carries the 5-hydroxylysine; alternate modification. Lys-914 carries an O-linked (Gal...) hydroxylysine; alternate glycan. 4 positions are modified to 4-hydroxyproline: Pro-929, Pro-932, Pro-950, and Pro-965. Residues 932 to 965 show a composition bias toward low complexity; the sequence is PGEQGPSGASGPAGPRGPPGSAGTPGKDGLNGLP. Pro-970 carries the 3-hydroxyproline modification. Position 971 is a 4-hydroxyproline (Pro-971). Pro residues predominate over residues 983 to 998; that stretch reads VGPPGPPGPPGPPGPP. 3-hydroxyproline is present on Pro-985. At Pro-986 the chain carries 4-hydroxyproline. Position 988 is a 3-hydroxyproline (Pro-988). A 4-hydroxyproline modification is found at Pro-989. At Pro-991 the chain carries 3-hydroxyproline. Pro-992, Pro-995, and Pro-998 each carry 4-hydroxyproline.

This sequence belongs to the fibrillar collagen family. As to quaternary structure, trimers of one alpha 2(I) and two alpha 1(I) chains. In terms of processing, contains mostly 4-hydroxyproline. Proline residues at the third position of the tripeptide repeating unit (G-X-Y) are hydroxylated in some or all of the chains. Contains 3-hydroxyproline at a few sites. This modification occurs on the first proline residue in the sequence motif Gly-Pro-Hyp, where Hyp is 4-hydroxyproline. Post-translationally, lysine residues at the third position of the tripeptide repeating unit (G-X-Y) are 5-hydroxylated in some or all of the chains. In terms of processing, O-glycosylated on hydroxylated lysine residues. The O-linked glycan consists of a Glc-Gal disaccharide. Expressed in bones.

It localises to the secreted. The protein localises to the extracellular space. It is found in the extracellular matrix. Type I collagen is a member of group I collagen (fibrillar forming collagen). This chain is Collagen alpha-1(I) chain, found in Glyptodon sp. (strain SLP-2019) (Giant armadillo).